A 1067-amino-acid polypeptide reads, in one-letter code: Ubiquitin carboxyl-terminal hydrolase 26 (1067 aa).

Over residues 1–12 (MSRPNTRNKNKR) the composition is skewed to basic residues. The tract at residues 1 to 22 (MSRPNTRNKNKRQRPDAVDSSS) is disordered. The USP domain occupies 106-442 (AGLTNLGATC…DAYMLMYSLR (337 aa)). Cys-115 serves as the catalytic Nucleophile. His-359 (proton acceptor) is an active-site residue. Residues 385-418 (KRPCNEASSSTPQSESNGTASSGNITDGIQSGSS) form a disordered region. Residues 390-418 (EASSSTPQSESNGTASSGNITDGIQSGSS) are compositionally biased toward polar residues. 3 consecutive DUSP domains span residues 503-595 (NALT…GDYC), 610-711 (DSYR…DCTC), and 738-861 (TLKV…SAFI). The Ubiquitin-like domain occupies 948 to 1031 (FEVDRRTSKR…LWVRDTEMHE (84 aa)).

This sequence belongs to the peptidase C19 family. As to expression, expressed in seedlings, roots, stems, leaves and inflorescences.

Its subcellular location is the nucleus. The catalysed reaction is Thiol-dependent hydrolysis of ester, thioester, amide, peptide and isopeptide bonds formed by the C-terminal Gly of ubiquitin (a 76-residue protein attached to proteins as an intracellular targeting signal).. Its function is as follows. Recognizes and hydrolyzes the peptide bond at the C-terminal Gly of ubiquitin. Involved in the processing of poly-ubiquitin precursors as well as that of ubiquitinated proteins. Deubiquitinates H2BK143ub1 of histone H2B. The polypeptide is Ubiquitin carboxyl-terminal hydrolase 26 (UBP26) (Arabidopsis thaliana (Mouse-ear cress)).